Here is a 196-residue protein sequence, read N- to C-terminus: Heat shock protein beta-8 (196 aa).

The interval 1 to 28 is disordered; that stretch reads MADGQLPFPCSYPSRLRRDPFRDSPLSS. S24 and S57 each carry phosphoserine. Phosphothreonine is present on T63. Asymmetric dimethylarginine is present on residues R71 and R78. A sHSP domain is found at 74 to 185; it reads TATARFGVPA…PFGESSFNNE (112 aa). Residues 176-196 form a disordered region; it reads PFGESSFNNELPQDNQEVTCS. Residues 178 to 196 show a composition bias toward polar residues; that stretch reads GESSFNNELPQDNQEVTCS.

This sequence belongs to the small heat shock protein (HSP20) family. In terms of assembly, monomer. Forms a ternary complex with BAG3 and HSPA1A. Component of the chaperone-assisted selective autophagy (CASA) complex consisting of BAG3, HSPA8/HSC70, HSPB8 and STUB1/CHIP. Interacts with HSPB1. Interacts with DNAJB6. Interacts with BAG3. Post-translationally, phosphorylated.

It is found in the cytoplasm. The protein localises to the nucleus. Its function is as follows. Involved in the chaperone-assisted selective autophagy (CASA), a crucial process for protein quality control, particularly in mechanical strained cells and tissues such as muscle. Displays temperature-dependent chaperone activity. This Rattus norvegicus (Rat) protein is Heat shock protein beta-8 (Hspb8).